The sequence spans 160 residues: Small ribosomal subunit protein uS7 (160 aa).

Belongs to the universal ribosomal protein uS7 family. As to quaternary structure, part of the 30S ribosomal subunit. Contacts proteins S9 and S11.

In terms of biological role, one of the primary rRNA binding proteins, it binds directly to 16S rRNA where it nucleates assembly of the head domain of the 30S subunit. Is located at the subunit interface close to the decoding center, probably blocks exit of the E-site tRNA. The polypeptide is Small ribosomal subunit protein uS7 (Rickettsia canadensis (strain McKiel)).